The sequence spans 503 residues: GMP synthase [glutamine-hydrolyzing] (503 aa).

A Glutamine amidotransferase type-1 domain is found at 1–189 (MVLVLDFGSQ…FLELAGVKRD (189 aa)). Cys-78 (nucleophile) is an active-site residue. Residues His-164 and Glu-166 contribute to the active site. The GMPS ATP-PPase domain occupies 190-378 (WTPEHVLEEL…LGLPDTLRLR (189 aa)). 217–223 (SGGVDSS) contributes to the ATP binding site.

As to quaternary structure, homodimer.

It carries out the reaction XMP + L-glutamine + ATP + H2O = GMP + L-glutamate + AMP + diphosphate + 2 H(+). It functions in the pathway purine metabolism; GMP biosynthesis; GMP from XMP (L-Gln route): step 1/1. Catalyzes the synthesis of GMP from XMP. The sequence is that of GMP synthase [glutamine-hydrolyzing] from Thermus thermophilus (strain ATCC 27634 / DSM 579 / HB8).